The following is a 244-amino-acid chain: MTLDLDAHKKDDKLLITTIQQEYKILAEYKMIESEKLSGIYVIPSYANSLQWFGVFFGRQGLYAESVFRFTILLPDRFPDDKSLPTIIFQQDVIHPHVCPYTHSLDVSHAFPEWRCGEDHLWQLLKYLQVIFSDPLDSIRGIEVDKLKNREAAELLMNNKEEYVARVQENIKESKEHIFDTPPTEDPNYIVFEKFQQDVHGPVLDRIKAGRSKQTEPSAQQGNGGHATGLSWVKEGEFKPLSIE.

The UBC core domain occupies 20 to 176; it reads QQEYKILAEY…VQENIKESKE (157 aa). Residues 209–244 are disordered; that stretch reads AGRSKQTEPSAQQGNGGHATGLSWVKEGEFKPLSIE.

This sequence belongs to the ubiquitin-conjugating enzyme family. FTS subfamily.

The chain is Protein crossbronx (cbx) from Drosophila sechellia (Fruit fly).